The primary structure comprises 245 residues: NAD-dependent protein deacylase (245 aa).

The Deacetylase sirtuin-type domain maps to 1–237 (MNFPYRNIVV…PKLVEELLAH (237 aa)). 13–32 (GAGISAESGIQTFRAQDGLW) contacts NAD(+). Y57 and R60 together coordinate substrate. 94-97 (QNID) provides a ligand contact to NAD(+). The active-site Proton acceptor is the H112. Zn(2+) contacts are provided by C120 and C139. NAD(+) is bound by residues 179–181 (GTS), 205–207 (NLE), and A223.

This sequence belongs to the sirtuin family. Class III subfamily. Requires Zn(2+) as cofactor.

The protein resides in the cytoplasm. The enzyme catalyses N(6)-acetyl-L-lysyl-[protein] + NAD(+) + H2O = 2''-O-acetyl-ADP-D-ribose + nicotinamide + L-lysyl-[protein]. It catalyses the reaction N(6)-succinyl-L-lysyl-[protein] + NAD(+) + H2O = 2''-O-succinyl-ADP-D-ribose + nicotinamide + L-lysyl-[protein]. Its function is as follows. NAD-dependent lysine deacetylase and desuccinylase that specifically removes acetyl and succinyl groups on target proteins. Modulates the activities of several proteins which are inactive in their acylated form. This chain is NAD-dependent protein deacylase, found in Vibrio vulnificus (strain YJ016).